The following is a 288-amino-acid chain: Cytochrome b-c1 complex catalytic subunit, mitochondrial (288 aa).

Residues 12–34 (SMVQKFIAGGVGVTGLTASYLLY) form a helical membrane-spanning segment. In terms of domain architecture, Cytochrome c spans 69–222 (ASIRRGFQVY…DLVEYEDGTP (154 aa)). Cys-82, Cys-85, and His-86 together coordinate heme c. Residues 111 to 121 (EELEYDDEPDD) are compositionally biased toward acidic residues. The disordered stretch occupies residues 111-138 (EELEYDDEPDDEGKPRKRPGKLADYIPG). The helical transmembrane segment at 250-268 (WGLKALVVLSSLYLLSIWV) threads the bilayer.

This sequence belongs to the cytochrome c family. In terms of assembly, component of the ubiquinol-cytochrome c oxidoreductase (cytochrome b-c1 complex, complex III, CIII), a multisubunit enzyme composed of 10 subunits. The complex is composed of 3 respiratory subunits cytochrome b (COB), cytochrome c1 (CYT1) and Rieske protein (RIP1), 2 core protein subunits COR1 and QCR2, and 5 low-molecular weight protein subunits QCR6, QCR7, QCR8, QCR9 and QCR10. The complex exists as an obligatory dimer and forms supercomplexes (SCs) in the inner mitochondrial membrane with a monomer or a dimer of cytochrome c oxidase (complex IV, CIV), resulting in 2 different assemblies (supercomplexes III(2)IV and III(2)IV(2)). Heme c is required as a cofactor.

The protein resides in the mitochondrion inner membrane. The catalysed reaction is a quinol + 2 Fe(III)-[cytochrome c](out) = a quinone + 2 Fe(II)-[cytochrome c](out) + 2 H(+)(out). Component of the ubiquinol-cytochrome c oxidoreductase, a multisubunit transmembrane complex that is part of the mitochondrial electron transport chain which drives oxidative phosphorylation. The complex plays an important role in the uptake of multiple carbon sources present in different host niches. The polypeptide is Cytochrome b-c1 complex catalytic subunit, mitochondrial (Candida albicans (strain SC5314 / ATCC MYA-2876) (Yeast)).